Reading from the N-terminus, the 438-residue chain is Elongation factor 1-alpha (438 aa).

The tr-type G domain occupies 5–228; sequence KPHLNLVVIG…ALDSLEPPPK (224 aa). Residues 14 to 21 are G1; that stretch reads GHVDHGKS. 14–21 lines the GTP pocket; that stretch reads GHVDHGKS. Mg(2+) is bound at residue S21. Positions 70–74 are G2; it reads GVTIA. The interval 91 to 94 is G3; the sequence is DAPG. Residues 91-95 and 153-156 contribute to the GTP site; these read DAPGH and NKMD. The G4 stretch occupies residues 153–156; the sequence is NKMD. The G5 stretch occupies residues 194-196; the sequence is SAW.

This sequence belongs to the TRAFAC class translation factor GTPase superfamily. Classic translation factor GTPase family. EF-Tu/EF-1A subfamily.

Its subcellular location is the cytoplasm. It carries out the reaction GTP + H2O = GDP + phosphate + H(+). In terms of biological role, GTP hydrolase that promotes the GTP-dependent binding of aminoacyl-tRNA to the A-site of ribosomes during protein biosynthesis. In Staphylothermus marinus (strain ATCC 43588 / DSM 3639 / JCM 9404 / F1), this protein is Elongation factor 1-alpha.